Here is a 401-residue protein sequence, read N- to C-terminus: Imidazolonepropionase (401 aa).

Fe(3+) contacts are provided by His-70 and His-72. Zn(2+) contacts are provided by His-70 and His-72. The 4-imidazolone-5-propanoate site is built by Arg-79, Tyr-142, and His-175. Tyr-142 is an N-formimidoyl-L-glutamate binding site. Fe(3+) is bound at residue His-240. Residue His-240 participates in Zn(2+) binding. Gln-243 contacts 4-imidazolone-5-propanoate. Asp-315 serves as a coordination point for Fe(3+). Residue Asp-315 coordinates Zn(2+). Positions 317 and 319 each coordinate N-formimidoyl-L-glutamate. 4-imidazolone-5-propanoate is bound at residue Ser-320.

It belongs to the metallo-dependent hydrolases superfamily. HutI family. It depends on Zn(2+) as a cofactor. The cofactor is Fe(3+).

It is found in the cytoplasm. The catalysed reaction is 4-imidazolone-5-propanoate + H2O = N-formimidoyl-L-glutamate. Its pathway is amino-acid degradation; L-histidine degradation into L-glutamate; N-formimidoyl-L-glutamate from L-histidine: step 3/3. Functionally, catalyzes the hydrolytic cleavage of the carbon-nitrogen bond in imidazolone-5-propanoate to yield N-formimidoyl-L-glutamate. It is the third step in the universal histidine degradation pathway. In Ruegeria pomeroyi (strain ATCC 700808 / DSM 15171 / DSS-3) (Silicibacter pomeroyi), this protein is Imidazolonepropionase.